The sequence spans 771 residues: DNA polymerase 1 (771 aa).

This sequence belongs to the DNA polymerase type-B family.

The catalysed reaction is DNA(n) + a 2'-deoxyribonucleoside 5'-triphosphate = DNA(n+1) + diphosphate. In Pyrococcus abyssi (strain GE5 / Orsay), this protein is DNA polymerase 1 (polI).